A 61-amino-acid polypeptide reads, in one-letter code: Photosystem II reaction center protein K (61 aa).

The propeptide occupies 1-24 (MINIVSLVCIYINSVPYSSIFFLD). A helical membrane pass occupies residues 36 to 56 (IVDIMPVIPLFFFLLAFVWQA).

It belongs to the PsbK family. As to quaternary structure, PSII is composed of 1 copy each of membrane proteins PsbA, PsbB, PsbC, PsbD, PsbE, PsbF, PsbH, PsbI, PsbJ, PsbK, PsbL, PsbM, PsbT, PsbX, PsbY, PsbZ, Psb30/Ycf12, at least 3 peripheral proteins of the oxygen-evolving complex and a large number of cofactors. It forms dimeric complexes.

The protein resides in the plastid. It localises to the chloroplast thylakoid membrane. Its function is as follows. One of the components of the core complex of photosystem II (PSII). PSII is a light-driven water:plastoquinone oxidoreductase that uses light energy to abstract electrons from H(2)O, generating O(2) and a proton gradient subsequently used for ATP formation. It consists of a core antenna complex that captures photons, and an electron transfer chain that converts photonic excitation into a charge separation. This chain is Photosystem II reaction center protein K, found in Lotus japonicus (Lotus corniculatus var. japonicus).